A 473-amino-acid polypeptide reads, in one-letter code: Lactate utilization protein B (473 aa).

4Fe-4S ferredoxin-type domains follow at residues 303 to 333 (GTAF…GHSY) and 352 to 381 (YDDY…LHEL). Residues C312, C315, C318, C322, C365, C368, and C372 each coordinate [4Fe-4S] cluster.

Belongs to the LutB/YkgF family.

In terms of biological role, is involved in L-lactate degradation and allows cells to grow with lactate as the sole carbon source. Has probably a role as an electron transporter during oxidation of L-lactate. This chain is Lactate utilization protein B, found in Bacillus pumilus (strain SAFR-032).